Consider the following 215-residue polypeptide: MEKFTVYKGLVAPLNRENVDTDAIIPKQFLKSIKKTGFGQNLFDEWRYLDHGEPGQDCSTRPINPDFVLNQPRYKGAGILLARKNFGCGSSREHAPWALDQFGFRAVIAPSFADIFYSNCFKNGVLPIVLTEVQVDHLFNETQAFNGYQLTIDLEAQQVIAPDGTAYNFDVAPFRKYCLLNGLDDIGLTLQHADKIKAYEAERILKMSWLATQLP.

The protein belongs to the LeuD family. LeuD type 1 subfamily. In terms of assembly, heterodimer of LeuC and LeuD.

The enzyme catalyses (2R,3S)-3-isopropylmalate = (2S)-2-isopropylmalate. Its pathway is amino-acid biosynthesis; L-leucine biosynthesis; L-leucine from 3-methyl-2-oxobutanoate: step 2/4. Functionally, catalyzes the isomerization between 2-isopropylmalate and 3-isopropylmalate, via the formation of 2-isopropylmaleate. The protein is 3-isopropylmalate dehydratase small subunit of Polynucleobacter necessarius subsp. necessarius (strain STIR1).